We begin with the raw amino-acid sequence, 2285 residues long: Protein Ycf2 (2285 aa).

1638 to 1645 (GSIGTGRS) serves as a coordination point for ATP.

The protein belongs to the Ycf2 family.

Its subcellular location is the plastid. The protein localises to the chloroplast stroma. Its function is as follows. Probable ATPase of unknown function. Its presence in a non-photosynthetic plant (Epifagus virginiana) and experiments in tobacco indicate that it has an essential function which is probably not related to photosynthesis. The chain is Protein Ycf2 from Populus trichocarpa (Western balsam poplar).